The sequence spans 222 residues: UPF0758 protein YicR (222 aa).

In terms of domain architecture, MPN spans 100-222; it reads PLLSPEMTRE…YVSFAERGWI (123 aa). Residues His171, His173, and Asp184 each contribute to the Zn(2+) site. The short motif at 171–184 is the JAMM motif element; sequence HNHPSGCAEPSKAD.

It belongs to the UPF0758 family. YicR subfamily.

The sequence is that of UPF0758 protein YicR from Escherichia coli (strain 55989 / EAEC).